Here is a 162-residue protein sequence, read N- to C-terminus: Phosphopantetheine adenylyltransferase (162 aa).

Substrate is bound at residue Ser-11. Residues Ser-11–Phe-12 and His-19 each bind ATP. Substrate-binding residues include Lys-43, Val-76, and Arg-90. Residues Gly-91–Arg-93, Glu-101, and His-126–Ser-132 contribute to the ATP site.

The protein belongs to the bacterial CoaD family. As to quaternary structure, homohexamer. Mg(2+) is required as a cofactor.

The protein resides in the cytoplasm. It catalyses the reaction (R)-4'-phosphopantetheine + ATP + H(+) = 3'-dephospho-CoA + diphosphate. Its pathway is cofactor biosynthesis; coenzyme A biosynthesis; CoA from (R)-pantothenate: step 4/5. Functionally, reversibly transfers an adenylyl group from ATP to 4'-phosphopantetheine, yielding dephospho-CoA (dPCoA) and pyrophosphate. This chain is Phosphopantetheine adenylyltransferase, found in Streptococcus pneumoniae (strain ATCC 700669 / Spain 23F-1).